A 229-amino-acid chain; its full sequence is Putative N-acetylmannosamine-6-phosphate 2-epimerase (229 aa).

This sequence belongs to the NanE family.

The catalysed reaction is an N-acyl-D-glucosamine 6-phosphate = an N-acyl-D-mannosamine 6-phosphate. It functions in the pathway amino-sugar metabolism; N-acetylneuraminate degradation; D-fructose 6-phosphate from N-acetylneuraminate: step 3/5. In terms of biological role, converts N-acetylmannosamine-6-phosphate (ManNAc-6-P) to N-acetylglucosamine-6-phosphate (GlcNAc-6-P). This Shigella dysenteriae serotype 1 (strain Sd197) protein is Putative N-acetylmannosamine-6-phosphate 2-epimerase.